We begin with the raw amino-acid sequence, 541 residues long: Propionate catabolism operon regulatory protein (541 aa).

In terms of domain architecture, Sigma-54 factor interaction spans 221–464; it reads IRGQSPQMEQ…RNMMERLALF (244 aa). 321-330 lines the ATP pocket; the sequence is AHGGTLFLDE. The H-T-H motif DNA-binding region spans 513 to 532; it reads KTAAARYLGISRTTLWRRLK.

Functionally, involved in the transcriptional regulation of the propionate catabolism operon. In Salmonella typhimurium (strain LT2 / SGSC1412 / ATCC 700720), this protein is Propionate catabolism operon regulatory protein (prpR).